The chain runs to 958 residues: Isoleucine--tRNA ligase (958 aa).

Positions 1 to 32 are disordered; sequence MSDNQNKPGKPAAKPQSKYPVNMTDTPFPMRG. The 'HIGH' region signature appears at 71–81; that stretch reads PYANGDIHLGH. Position 590 (Glu-590) interacts with L-isoleucyl-5'-AMP. Positions 631 to 635 match the 'KMSKS' region motif; it reads KMSKS. Lys-634 contacts ATP. Positions 921, 924, 941, and 944 each coordinate Zn(2+).

It belongs to the class-I aminoacyl-tRNA synthetase family. IleS type 1 subfamily. Monomer. It depends on Zn(2+) as a cofactor.

It is found in the cytoplasm. The catalysed reaction is tRNA(Ile) + L-isoleucine + ATP = L-isoleucyl-tRNA(Ile) + AMP + diphosphate. Its function is as follows. Catalyzes the attachment of isoleucine to tRNA(Ile). As IleRS can inadvertently accommodate and process structurally similar amino acids such as valine, to avoid such errors it has two additional distinct tRNA(Ile)-dependent editing activities. One activity is designated as 'pretransfer' editing and involves the hydrolysis of activated Val-AMP. The other activity is designated 'posttransfer' editing and involves deacylation of mischarged Val-tRNA(Ile). The chain is Isoleucine--tRNA ligase from Janthinobacterium sp. (strain Marseille) (Minibacterium massiliensis).